A 234-amino-acid chain; its full sequence is MHIPESLQDLADSEAVQFLKRPKAITRIFAGVFSLIVFSSLLTDGYQNKTDNSELHCVLNSNSTACSIAVGAGLLAFLSSLAFLALDAHEVRLASTRFKTAFQLLDLILAVIWAGVWAVGFCFLANQWHRSPPRYFLLGSNSAKAAITFSFFSILVWIFQAYLAFQELRNDAPVPYKRSLDEGGVVLTSLSPPSAASPVNTPTTGPHGPSYASSSLSPYLSTPKAPRLAMMPDN.

Positions 18-169 constitute an MARVEL domain; it reads FLKRPKAITR…QAYLAFQELR (152 aa). 4 helical membrane-spanning segments follow: residues 25-45, 66-86, 104-124, and 145-165; these read ITRIFAGVFSLIVFSSLLTDG, CSIAVGAGLLAFLSSLAFLAL, LLDLILAVIWAGVWAVGFCFL, and AAITFSFFSILVWIFQAYLAF. The tract at residues 191–226 is disordered; it reads SPPSAASPVNTPTTGPHGPSYASSSLSPYLSTPKAP. Positions 209-221 are enriched in low complexity; sequence PSYASSSLSPYLS.

The protein belongs to the synaptogyrin family.

It is found in the membrane. This Bos taurus (Bovine) protein is Synaptogyrin-4 (SYNGR4).